Consider the following 343-residue polypeptide: Fructose-1,6-bisphosphatase class 1 (343 aa).

Mg(2+) contacts are provided by glutamate 91, aspartate 113, isoleucine 115, and aspartate 116. Substrate is bound by residues 116–119 (DGSS), asparagine 210, and lysine 276. Residue glutamate 282 coordinates Mg(2+).

This sequence belongs to the FBPase class 1 family. In terms of assembly, homotetramer. Requires Mg(2+) as cofactor.

The protein localises to the cytoplasm. The enzyme catalyses beta-D-fructose 1,6-bisphosphate + H2O = beta-D-fructose 6-phosphate + phosphate. It participates in carbohydrate biosynthesis; gluconeogenesis. The polypeptide is Fructose-1,6-bisphosphatase class 1 (Parvibaculum lavamentivorans (strain DS-1 / DSM 13023 / NCIMB 13966)).